The sequence spans 435 residues: Nucleoredoxin (435 aa).

Ser2 carries the post-translational modification N-acetylserine. Residues 167–314 enclose the Thioredoxin domain; sequence PKPFREVIAG…FPWHPKPVLE (148 aa).

Belongs to the nucleoredoxin family. Associates with the phosphatase 2A holoenzyme. Interacts with PPP2CA; the interaction is direct. Interacts with DVL1 (via PDZ domain); the interaction is direct and regulated by oxidative stress. In terms of tissue distribution, widely expressed with higher expression in testis and skin.

It localises to the cytoplasm. The protein localises to the cytosol. Its subcellular location is the nucleus. It carries out the reaction [protein]-dithiol + NAD(+) = [protein]-disulfide + NADH + H(+). It catalyses the reaction [protein]-dithiol + NADP(+) = [protein]-disulfide + NADPH + H(+). Functionally, functions as a redox-dependent negative regulator of the Wnt signaling pathway, possibly by preventing ubiquitination of DVL3 by the BCR(KLHL12) complex. May also function as a transcriptional regulator act as a regulator of protein phosphatase 2A (PP2A). The chain is Nucleoredoxin (Nxn) from Mus musculus (Mouse).